A 344-amino-acid polypeptide reads, in one-letter code: Ferrochelatase (344 aa).

Positions 191 and 271 each coordinate Fe cation.

This sequence belongs to the ferrochelatase family.

Its subcellular location is the cytoplasm. It catalyses the reaction heme b + 2 H(+) = protoporphyrin IX + Fe(2+). Its pathway is porphyrin-containing compound metabolism; protoheme biosynthesis; protoheme from protoporphyrin-IX: step 1/1. Its function is as follows. Catalyzes the ferrous insertion into protoporphyrin IX. This is Ferrochelatase from Pelagibacter ubique (strain HTCC1062).